The primary structure comprises 408 residues: Histidine--tRNA ligase (408 aa).

The protein belongs to the class-II aminoacyl-tRNA synthetase family. As to quaternary structure, homodimer.

It is found in the cytoplasm. It carries out the reaction tRNA(His) + L-histidine + ATP = L-histidyl-tRNA(His) + AMP + diphosphate + H(+). The sequence is that of Histidine--tRNA ligase from Campylobacter jejuni subsp. doylei (strain ATCC BAA-1458 / RM4099 / 269.97).